The sequence spans 240 residues: Oxygen-insensitive NADPH nitroreductase (240 aa).

Residues histidine 11–arginine 15, serine 39, glutamine 67, tyrosine 128–glycine 131, and lysine 167–arginine 169 each bind FMN.

This sequence belongs to the flavin oxidoreductase frp family. Homodimer. Requires FMN as cofactor.

In terms of biological role, catalyzes the reduction of nitroaromatic compounds using NADPH. Has a broad electron acceptor specificity. Reduces nitrofurazone by a ping-pong bi-bi mechanism possibly to generate a two-electron transfer product. Major oxygen-insensitive nitroreductase in E.coli. The protein is Oxygen-insensitive NADPH nitroreductase (nfsA) of Escherichia coli (strain K12).